The primary structure comprises 150 residues: UPF0178 protein BceJ2315_16760 (150 aa).

It belongs to the UPF0178 family.

This is UPF0178 protein BceJ2315_16760 from Burkholderia cenocepacia (strain ATCC BAA-245 / DSM 16553 / LMG 16656 / NCTC 13227 / J2315 / CF5610) (Burkholderia cepacia (strain J2315)).